We begin with the raw amino-acid sequence, 182 residues long: Ribosome-recycling factor (182 aa).

Belongs to the RRF family.

The protein resides in the cytoplasm. In terms of biological role, responsible for the release of ribosomes from messenger RNA at the termination of protein biosynthesis. May increase the efficiency of translation by recycling ribosomes from one round of translation to another. The polypeptide is Ribosome-recycling factor (Synechococcus sp. (strain JA-2-3B'a(2-13)) (Cyanobacteria bacterium Yellowstone B-Prime)).